Here is a 325-residue protein sequence, read N- to C-terminus: Probable ABC transporter permease YtrD (325 aa).

8 helical membrane-spanning segments follow: residues 16–36 (VALV…ILNM), 63–83 (SSFI…QLGI), 113–133 (MVIV…IMLL), 146–166 (LGMI…GALT), 179–199 (VAIS…ILFG), 233–253 (YLVI…ISFV), 272–292 (PVQI…GFTA), and 298–318 (GYLI…YFAI).

It belongs to the ABC-5 integral membrane protein family. As to quaternary structure, the complex is composed of 2 ATP-binding proteins (YtrB and YtrE), 2 transmembrane proteins (YtrC and YtrD) and a solute-binding protein (YtrF).

It is found in the cell membrane. Functionally, part of the ABC transporter complex YtrBCDEF that plays a role in acetoin utilization during stationary phase and sporulation. This is Probable ABC transporter permease YtrD (ytrD) from Bacillus subtilis (strain 168).